We begin with the raw amino-acid sequence, 328 residues long: Sterol-4-alpha-carboxylate 3-dehydrogenase, decarboxylating (328 aa).

Tyr-145 (proton acceptor) is an active-site residue. Lys-149 is a binding site for NAD(+). The chain crosses the membrane as a helical span at residues 259–279 (LHMVLPTPIALSLVWIMALIW).

The protein belongs to the 3-beta-HSD family. In terms of assembly, homodimer.

The protein localises to the endoplasmic reticulum membrane. The protein resides in the lipid droplet. The enzyme catalyses a 3beta-hydroxysteroid-4alpha-carboxylate + NADP(+) = a 3-oxosteroid + CO2 + NADPH. It catalyses the reaction a 3beta-hydroxysteroid-4alpha-carboxylate + NAD(+) = a 3-oxosteroid + CO2 + NADH. It functions in the pathway steroid biosynthesis; zymosterol biosynthesis; zymosterol from lanosterol: step 4/6. Its function is as follows. Catalyzes the NAD(P)(+)-dependent oxidative decarboxylation of the C4 methyl groups of 4-alpha-carboxysterols in post-squalene cholesterol biosynthesis. The polypeptide is Sterol-4-alpha-carboxylate 3-dehydrogenase, decarboxylating (nsdhl) (Dictyostelium discoideum (Social amoeba)).